Consider the following 189-residue polypeptide: Peptidyl-tRNA hydrolase (189 aa).

Tyr15 serves as a coordination point for tRNA. His20 serves as the catalytic Proton acceptor. The tRNA site is built by Phe66, Asn68, and Asn114.

Belongs to the PTH family. Monomer.

Its subcellular location is the cytoplasm. It catalyses the reaction an N-acyl-L-alpha-aminoacyl-tRNA + H2O = an N-acyl-L-amino acid + a tRNA + H(+). Functionally, hydrolyzes ribosome-free peptidyl-tRNAs (with 1 or more amino acids incorporated), which drop off the ribosome during protein synthesis, or as a result of ribosome stalling. Its function is as follows. Catalyzes the release of premature peptidyl moieties from peptidyl-tRNA molecules trapped in stalled 50S ribosomal subunits, and thus maintains levels of free tRNAs and 50S ribosomes. The chain is Peptidyl-tRNA hydrolase from Streptococcus pneumoniae (strain JJA).